A 460-amino-acid chain; its full sequence is Bifunctional protein GlmU (460 aa).

The segment at 1-232 (MENVAAIILA…SDEIMGVNDR (232 aa)) is pyrophosphorylase. Residues 9-12 (LAAG), lysine 23, glutamine 75, and 80-81 (GT) contribute to the UDP-N-acetyl-alpha-D-glucosamine site. Aspartate 105 provides a ligand contact to Mg(2+). 4 residues coordinate UDP-N-acetyl-alpha-D-glucosamine: glycine 142, glutamate 157, asparagine 172, and asparagine 230. Asparagine 230 is a binding site for Mg(2+). Residues 233-253 (AQLAQAARILRRRINRDLMLS) are linker. Residues 254–460 (GVSLVDPEQT…GWRIRMKKKT (207 aa)) are N-acetyltransferase. Arginine 336 and lysine 354 together coordinate UDP-N-acetyl-alpha-D-glucosamine. Histidine 366 functions as the Proton acceptor in the catalytic mechanism. Positions 369 and 380 each coordinate UDP-N-acetyl-alpha-D-glucosamine. Residues 389-390 (NY), serine 408, alanine 426, and arginine 443 contribute to the acetyl-CoA site.

The protein in the N-terminal section; belongs to the N-acetylglucosamine-1-phosphate uridyltransferase family. In the C-terminal section; belongs to the transferase hexapeptide repeat family. Homotrimer. Mg(2+) is required as a cofactor.

The protein localises to the cytoplasm. It carries out the reaction alpha-D-glucosamine 1-phosphate + acetyl-CoA = N-acetyl-alpha-D-glucosamine 1-phosphate + CoA + H(+). The catalysed reaction is N-acetyl-alpha-D-glucosamine 1-phosphate + UTP + H(+) = UDP-N-acetyl-alpha-D-glucosamine + diphosphate. Its pathway is nucleotide-sugar biosynthesis; UDP-N-acetyl-alpha-D-glucosamine biosynthesis; N-acetyl-alpha-D-glucosamine 1-phosphate from alpha-D-glucosamine 6-phosphate (route II): step 2/2. It functions in the pathway nucleotide-sugar biosynthesis; UDP-N-acetyl-alpha-D-glucosamine biosynthesis; UDP-N-acetyl-alpha-D-glucosamine from N-acetyl-alpha-D-glucosamine 1-phosphate: step 1/1. It participates in bacterial outer membrane biogenesis; LPS lipid A biosynthesis. Its function is as follows. Catalyzes the last two sequential reactions in the de novo biosynthetic pathway for UDP-N-acetylglucosamine (UDP-GlcNAc). The C-terminal domain catalyzes the transfer of acetyl group from acetyl coenzyme A to glucosamine-1-phosphate (GlcN-1-P) to produce N-acetylglucosamine-1-phosphate (GlcNAc-1-P), which is converted into UDP-GlcNAc by the transfer of uridine 5-monophosphate (from uridine 5-triphosphate), a reaction catalyzed by the N-terminal domain. The chain is Bifunctional protein GlmU from Pelobacter propionicus (strain DSM 2379 / NBRC 103807 / OttBd1).